Consider the following 584-residue polypeptide: Protein spire homolog 1 (584 aa).

Residues 1–30 (MANTVEADGSNDEGYEAAEEGPEDEEDEKR) are disordered. Positions 1–73 (MANTVEADGS…RALFAETMEL (73 aa)) constitute a KIND domain. The segment covering 9–28 (GSNDEGYEAAEEGPEDEEDE) has biased composition (acidic residues). Residues 71–99 (MELHTFLAKVKSAKENLKKIQEMEKSDES) are a coiled coil. WH2 domains are found at residues 147–165 (PYEM…LRKV) and 211–228 (LHER…LRPV). Residues 224-238 (KLRPVSPEEIRRSRL) show a composition bias toward basic and acidic residues. A disordered region spans residues 224–366 (KLRPVSPEEI…PTNVRQFLPP (143 aa)). A Phosphoserine modification is found at serine 229. Over residues 242–272 (TPESTKNLMESSMVNGGLTSQTKENGLSSAE) the composition is skewed to polar residues. 3 positions are modified to phosphoserine: serine 292, serine 293, and serine 295. Over residues 302-320 (KSTSSSSVSPSFPEEPVLE) the composition is skewed to low complexity. Position 337 is a phosphothreonine (threonine 337). A compositionally biased stretch (basic and acidic residues) spans 340–356 (PERRQPPQRRHSIEKET). A compositionally biased stretch (polar residues) spans 357–366 (PTNVRQFLPP). Residues 384-404 (LALTVEEVMHIRQVLVKAELE) are spir-box. Phosphoserine occurs at positions 506, 510, and 563.

Belongs to the spire family. Interacts with FMN2.

The protein resides in the cytoplasm. The protein localises to the cytoskeleton. It localises to the cytosol. Its subcellular location is the cleavage furrow. It is found in the perinuclear region. The protein resides in the cell membrane. The protein localises to the cytoplasmic vesicle membrane. Its function is as follows. Acts as an actin nucleation factor, remains associated with the slow-growing pointed end of the new filament. Involved in intracellular vesicle transport along actin fibers, providing a novel link between actin cytoskeleton dynamics and intracellular transport. Required for asymmetric spindle positioning and asymmetric cell division during meiosis. Required for normal formation of the cleavage furrow and for polar body extrusion during female germ cell meiosis. Also acts in the nucleus: together with FMN2, promotes assembly of nuclear actin filaments in response to DNA damage in order to facilitate movement of chromatin and repair factors after DNA damage. In addition, promotes innate immune signaling downstream of dsRNA sensing. Mechanistically, contributes to IRF3 phosphorylation and activation downstream of MAVS and upstream of TBK1. The polypeptide is Protein spire homolog 1 (SPIRE1) (Macaca fascicularis (Crab-eating macaque)).